The sequence spans 57 residues: UPF0391 membrane protein BRADO2787 (57 aa).

The next 2 helical transmembrane spans lie at 6–26 (WALL…TGVS) and 35–55 (ILFY…LTIF).

The protein belongs to the UPF0391 family.

The protein localises to the cell membrane. The chain is UPF0391 membrane protein BRADO2787 from Bradyrhizobium sp. (strain ORS 278).